Reading from the N-terminus, the 292-residue chain is Elongation factor Ts (292 aa).

Positions 82-85 (TDFV) are involved in Mg(2+) ion dislocation from EF-Tu.

It belongs to the EF-Ts family.

The protein resides in the cytoplasm. Associates with the EF-Tu.GDP complex and induces the exchange of GDP to GTP. It remains bound to the aminoacyl-tRNA.EF-Tu.GTP complex up to the GTP hydrolysis stage on the ribosome. This chain is Elongation factor Ts, found in Legionella pneumophila (strain Lens).